The sequence spans 54 residues: Potassium channel toxin alpha-KTx 14.3 (54 aa).

A signal peptide spans 1 to 23; sequence MKIFFAILLILAVCSMAIWTVNG.

It belongs to the short scorpion toxin superfamily. Potassium channel inhibitor family. Alpha-KTx 14 subfamily. Post-translationally, contains 3 disulfide bridges. In terms of tissue distribution, expressed by the venom gland.

It localises to the secreted. Potential blocker of potassium channels. This Olivierus martensii (Manchurian scorpion) protein is Potassium channel toxin alpha-KTx 14.3.